Reading from the N-terminus, the 391-residue chain is Ferrochelatase (391 aa).

H196 and E281 together coordinate Fe cation.

This sequence belongs to the ferrochelatase family.

It localises to the cytoplasm. It catalyses the reaction heme b + 2 H(+) = protoporphyrin IX + Fe(2+). It functions in the pathway porphyrin-containing compound metabolism; protoheme biosynthesis; protoheme from protoporphyrin-IX: step 1/1. In terms of biological role, catalyzes the ferrous insertion into protoporphyrin IX. This is Ferrochelatase from Prochlorococcus marinus (strain MIT 9515).